A 284-amino-acid chain; its full sequence is Asialoglycoprotein receptor 1 (284 aa).

The Cytoplasmic segment spans residues 1–39 (MTKDYQDFQHLDNENDHHQLQRGPPPAPRLLQRLCSGFR). Residues 5 to 8 (YQDF) carry the Endocytosis signal motif. Cysteine 35 carries the S-palmitoyl cysteine lipid modification. The chain crosses the membrane as a helical; Signal-anchor for type II membrane protein span at residues 40-60 (LFLLSLGLSILLLVVVCVITS). Residues 58–122 (ITSQNSQLRE…EDLREDHSRL (65 aa)) adopt a coiled-coil conformation. Topologically, residues 61 to 284 (QNSQLREDLR…VCETELGKAN (224 aa)) are extracellular. N-linked (GlcNAc...) asparagine glycans are attached at residues asparagine 75, asparagine 78, and asparagine 146. 3 disulfides stabilise this stretch: cysteine 153-cysteine 164, cysteine 181-cysteine 276, and cysteine 254-cysteine 268. The C-type lectin domain occupies 160 to 277 (YEGSCYWFSS…CRRPYRWVCE (118 aa)). Residues valine 190, glutamate 196, aspartate 215, glutamine 239, aspartate 241, aspartate 242, glutamate 252, aspartate 253, asparagine 264, aspartate 265, and glutamate 277 each coordinate Ca(2+).

Interacts with LASS2. In terms of processing, phosphorylated on a cytoplasmic Ser residue. As to expression, expressed exclusively in hepatic parenchymal cells.

The protein localises to the membrane. Its function is as follows. Mediates the endocytosis of plasma glycoproteins to which the terminal sialic acid residue on their complex carbohydrate moieties has been removed. The receptor recognizes terminal galactose and N-acetylgalactosamine units. After ligand binding to the receptor, the resulting complex is internalized and transported to a sorting organelle, where receptor and ligand are disassociated. The receptor then returns to the cell membrane surface. The polypeptide is Asialoglycoprotein receptor 1 (Asgr1) (Rattus norvegicus (Rat)).